Consider the following 457-residue polypeptide: Siroheme synthase (457 aa).

Residues 1–204 (MDHLPIFCQL…NDQKAITETT (204 aa)) are precorrin-2 dehydrogenase /sirohydrochlorin ferrochelatase. NAD(+)-binding positions include 22–23 (DV) and 43–44 (LA). Ser128 is modified (phosphoserine). Positions 216-457 (GEVVLVGAGP…RDKLNWFSNH (242 aa)) are uroporphyrinogen-III C-methyltransferase. Pro225 lines the S-adenosyl-L-methionine pocket. Asp248 acts as the Proton acceptor in catalysis. Residue Lys270 is the Proton donor of the active site. S-adenosyl-L-methionine is bound by residues 301–303 (GGD), Ile306, 331–332 (TA), Met382, and Gly411.

It in the N-terminal section; belongs to the precorrin-2 dehydrogenase / sirohydrochlorin ferrochelatase family. In the C-terminal section; belongs to the precorrin methyltransferase family.

The catalysed reaction is uroporphyrinogen III + 2 S-adenosyl-L-methionine = precorrin-2 + 2 S-adenosyl-L-homocysteine + H(+). The enzyme catalyses precorrin-2 + NAD(+) = sirohydrochlorin + NADH + 2 H(+). It carries out the reaction siroheme + 2 H(+) = sirohydrochlorin + Fe(2+). It functions in the pathway cofactor biosynthesis; adenosylcobalamin biosynthesis; precorrin-2 from uroporphyrinogen III: step 1/1. It participates in cofactor biosynthesis; adenosylcobalamin biosynthesis; sirohydrochlorin from precorrin-2: step 1/1. Its pathway is porphyrin-containing compound metabolism; siroheme biosynthesis; precorrin-2 from uroporphyrinogen III: step 1/1. The protein operates within porphyrin-containing compound metabolism; siroheme biosynthesis; siroheme from sirohydrochlorin: step 1/1. It functions in the pathway porphyrin-containing compound metabolism; siroheme biosynthesis; sirohydrochlorin from precorrin-2: step 1/1. Functionally, multifunctional enzyme that catalyzes the SAM-dependent methylations of uroporphyrinogen III at position C-2 and C-7 to form precorrin-2 via precorrin-1. Then it catalyzes the NAD-dependent ring dehydrogenation of precorrin-2 to yield sirohydrochlorin. Finally, it catalyzes the ferrochelation of sirohydrochlorin to yield siroheme. This chain is Siroheme synthase, found in Escherichia coli O6:K15:H31 (strain 536 / UPEC).